The primary structure comprises 1219 residues: Type IV pilus biogenesis factor PilY1 homolog PD_0502 (1219 aa).

An N-terminal signal peptide occupies residues 1 to 35 (MVGMSRIILNNLFFFRCVVAVFSAHSLVISGAVHA). A disordered region spans residues 212–234 (GLSTDPLNTEGQPYDPSRHPLNS). Ca(2+) contacts are provided by Q958, N960, I962, and D964.

It belongs to the PilY1 family.

The protein resides in the fimbrium. One of the three PilY1 homologs of X.fastidiosa, which are involved in bacterial twitching motility as component of the filamentous type IV pili (T4P). This Xylella fastidiosa (strain Temecula1 / ATCC 700964) protein is Type IV pilus biogenesis factor PilY1 homolog PD_0502.